A 319-amino-acid polypeptide reads, in one-letter code: ATP-dependent 6-phosphofructokinase (319 aa).

G11 provides a ligand contact to ATP. 21 to 25 (RAVVR) serves as a coordination point for ADP. Residues 72-73 (RC) and 102-105 (GDGS) contribute to the ATP site. D103 contacts Mg(2+). 125–127 (TID) provides a ligand contact to substrate. D127 (proton acceptor) is an active-site residue. Residue R154 participates in ADP binding. Substrate-binding positions include R162 and 169 to 171 (MGR). ADP is bound by residues 185–187 (GAE), R211, and 213–215 (KLH). Residues E222, R243, and 249-252 (HLQR) contribute to the substrate site.

The protein belongs to the phosphofructokinase type A (PFKA) family. ATP-dependent PFK group I subfamily. Prokaryotic clade 'B1' sub-subfamily. Homotetramer. The cofactor is Mg(2+).

It is found in the cytoplasm. The catalysed reaction is beta-D-fructose 6-phosphate + ATP = beta-D-fructose 1,6-bisphosphate + ADP + H(+). The protein operates within carbohydrate degradation; glycolysis; D-glyceraldehyde 3-phosphate and glycerone phosphate from D-glucose: step 3/4. With respect to regulation, allosterically activated by ADP and other diphosphonucleosides, and allosterically inhibited by phosphoenolpyruvate. Catalyzes the phosphorylation of D-fructose 6-phosphate to fructose 1,6-bisphosphate by ATP, the first committing step of glycolysis. The chain is ATP-dependent 6-phosphofructokinase from Clostridium novyi (strain NT).